The sequence spans 373 residues: MTNRWSFDVNKNLVTVLFTWLCLSISTAHAARIKDVAEVAGVRSNQLIGYGLVSGLPGTGESTPFTDQSFNAMLQNFGIQLPPGTKPKTKNVAAVMVTATLPPFSKQGQVVDVTVSSVGSAKSLRGGTLLQTFLKGLDGKTYAIAQGNLIVSGFSATGADGSKIVGNNPTVGRISGGAMVEREVPSPFGRGDFITFNLLESDFTTAQRMADAVNNFLGPNMASAVDATSVRVRAPRDISQRVAFLSAVENVDFDPADGSAKIIVNSRTGTIVVGKHVKLKPAAVTHGGMTVAIKENLQVSQPGPFSDGQTVVTPDSDIEVTEEQGKMFKFEPGLTLDDLVRAVNEVGAAPSDLMAILQALKQAGAIEGQLIII.

A signal peptide spans 1-30 (MTNRWSFDVNKNLVTVLFTWLCLSISTAHA).

The protein belongs to the FlgI family. In terms of assembly, the basal body constitutes a major portion of the flagellar organelle and consists of four rings (L,P,S, and M) mounted on a central rod.

It is found in the periplasm. Its subcellular location is the bacterial flagellum basal body. Assembles around the rod to form the L-ring and probably protects the motor/basal body from shearing forces during rotation. The chain is Flagellar P-ring protein from Aliivibrio fischeri (strain ATCC 700601 / ES114) (Vibrio fischeri).